The following is a 429-amino-acid chain: UDP-N-acetylglucosamine 1-carboxyvinyltransferase (429 aa).

Residue Lys22 to Asn23 coordinates phosphoenolpyruvate. A UDP-N-acetyl-alpha-D-glucosamine-binding site is contributed by Arg102. Cys126 serves as the catalytic Proton donor. Residue Cys126 is modified to 2-(S-cysteinyl)pyruvic acid O-phosphothioketal. UDP-N-acetyl-alpha-D-glucosamine contacts are provided by residues Arg131–Leu135, Asp316, and Ile338.

This sequence belongs to the EPSP synthase family. MurA subfamily.

It is found in the cytoplasm. The enzyme catalyses phosphoenolpyruvate + UDP-N-acetyl-alpha-D-glucosamine = UDP-N-acetyl-3-O-(1-carboxyvinyl)-alpha-D-glucosamine + phosphate. It functions in the pathway cell wall biogenesis; peptidoglycan biosynthesis. Cell wall formation. Adds enolpyruvyl to UDP-N-acetylglucosamine. The sequence is that of UDP-N-acetylglucosamine 1-carboxyvinyltransferase from Rhodopseudomonas palustris (strain BisB18).